A 411-amino-acid polypeptide reads, in one-letter code: Replication factor C subunit 2 (411 aa).

The tract at residues 1 to 36 (MADFFNLKARQQAAAQASSSKTPTSKQESNRLQPWV) is disordered. Positions 11-27 (QQAAAQASSSKTPTSKQ) are enriched in low complexity. ATP is bound by residues valine 36, arginine 40, 73–81 (GPPGTGKTS), asparagine 195, and arginine 253.

It belongs to the activator 1 small subunits family. As to quaternary structure, heteropentamer of subunits RFC1, RFC2, RFC3, RFC4 and RFC5 that forms a complex with PCNA in the presence of ATP.

The protein resides in the nucleus. Functionally, the elongation of primed DNA templates by DNA polymerase delta and epsilon requires the action of the accessory proteins proliferating cell nuclear antigen (PCNA) and activator 1. Subunit 2 binds ATP and single-stranded DNA. This Phaeosphaeria nodorum (strain SN15 / ATCC MYA-4574 / FGSC 10173) (Glume blotch fungus) protein is Replication factor C subunit 2 (RFC2).